We begin with the raw amino-acid sequence, 484 residues long: Oxysterol-binding protein-related protein 2 (484 aa).

A phosphoserine mark is found at Ser-19 and Ser-20. Residues Asp-35–Arg-61 form a disordered region. A 1,2-diacyl-sn-glycero-3-phospho-(1D-myo-inositol-4,5-bisphosphate)-binding positions include Lys-90 and His-178–His-179. Composition is skewed to basic and acidic residues over residues Lys-319–Asn-340 and Ser-424–Thr-450. 2 disordered regions span residues Lys-319–Ala-348 and Ala-423–Ser-454. Glu-431–Arg-435 is a binding site for a 1,2-diacyl-sn-glycero-3-phospho-(1D-myo-inositol-4,5-bisphosphate).

The protein belongs to the OSBP family. In terms of assembly, monomer. Homotetramer; phosphatidylinositol-4,5-bisphosphate binding promotes formation of stable tetramers. Interacts with DIAPH1. Detected in cochlea, in inner and outer hair cells in the organ of Corti (at protein level).

It localises to the cytoplasm. Its subcellular location is the cytosol. The protein localises to the lipid droplet. It is found in the cell membrane. In terms of biological role, intracellular transport protein that binds sterols and phospholipids and mediates lipid transport between intracellular compartments. Increases plasma membrane cholesterol levels and decreases phosphatidylinositol-4,5-bisphosphate levels in the cell membrane. Binds phosphoinositides, such as phosphatidylinositol-4,5-bisphosphate. Exhibits strong binding to phosphatidic acid and weak binding to phosphatidylinositol 3-phosphate. Binds cholesterol, dehydroergosterol, 22(R)-hydroxycholesterol and 25-hydroxycholesterol (in vitro). The chain is Oxysterol-binding protein-related protein 2 (Osbpl2) from Mus musculus (Mouse).